We begin with the raw amino-acid sequence, 562 residues long: Dihydroxy-acid dehydratase (562 aa).

Residue C55 participates in [2Fe-2S] cluster binding. D87 lines the Mg(2+) pocket. Residue C128 participates in [2Fe-2S] cluster binding. 2 residues coordinate Mg(2+): D129 and K130. Residue K130 is modified to N6-carboxylysine. Residue C200 participates in [2Fe-2S] cluster binding. E451 is a binding site for Mg(2+). Catalysis depends on S477, which acts as the Proton acceptor.

This sequence belongs to the IlvD/Edd family. Homodimer. It depends on [2Fe-2S] cluster as a cofactor. The cofactor is Mg(2+).

The catalysed reaction is (2R)-2,3-dihydroxy-3-methylbutanoate = 3-methyl-2-oxobutanoate + H2O. It carries out the reaction (2R,3R)-2,3-dihydroxy-3-methylpentanoate = (S)-3-methyl-2-oxopentanoate + H2O. It participates in amino-acid biosynthesis; L-isoleucine biosynthesis; L-isoleucine from 2-oxobutanoate: step 3/4. Its pathway is amino-acid biosynthesis; L-valine biosynthesis; L-valine from pyruvate: step 3/4. Its function is as follows. Functions in the biosynthesis of branched-chain amino acids. Catalyzes the dehydration of (2R,3R)-2,3-dihydroxy-3-methylpentanoate (2,3-dihydroxy-3-methylvalerate) into 2-oxo-3-methylpentanoate (2-oxo-3-methylvalerate) and of (2R)-2,3-dihydroxy-3-methylbutanoate (2,3-dihydroxyisovalerate) into 2-oxo-3-methylbutanoate (2-oxoisovalerate), the penultimate precursor to L-isoleucine and L-valine, respectively. The polypeptide is Dihydroxy-acid dehydratase (Cytophaga hutchinsonii (strain ATCC 33406 / DSM 1761 / CIP 103989 / NBRC 15051 / NCIMB 9469 / D465)).